The following is an 850-amino-acid chain: Trimethylamine-N-oxide reductase (850 aa).

Residues 1–39 (MKNKDSLHVSRRRFLAQLGGLTVAGMLGPSLLTPRSARA) constitute a signal peptide (tat-type signal). Residue serine 191 participates in Mo-bis(molybdopterin guanine dinucleotide) binding.

The protein belongs to the prokaryotic molybdopterin-containing oxidoreductase family. The cofactor is Mo-bis(molybdopterin guanine dinucleotide). Predicted to be exported by the Tat system. The position of the signal peptide cleavage has not been experimentally proven.

Its subcellular location is the periplasm. The catalysed reaction is trimethylamine + 2 Fe(III)-[cytochrome c] + H2O = trimethylamine N-oxide + 2 Fe(II)-[cytochrome c] + 3 H(+). Functionally, reduces trimethylamine-N-oxide (TMAO) into trimethylamine; an anaerobic reaction coupled to energy-yielding reactions. This chain is Trimethylamine-N-oxide reductase (torA), found in Salmonella typhi.